Here is an 843-residue protein sequence, read N- to C-terminus: MATRKAGSRLETEIERCRSECQWERIPELVKQLSAKLIANDDMAELLLGESKLEQHLKEKPLRQGASPRGPRPQLTEVRKHLTAALDRGNLKSEFLQESNLVMAKLTYVEGDYKEALNIYARVGLDDLPLTAVPPYRLRMIAEAYATKGLCLEKLPVSSSTSNLHVDREQDVITCYEKAGDIALLYLQEIERVMLTNIQNRSPKPGPAPHDQELGFFLETGLQRAHVLYFKNGNLTRGVGRFRELLRAVETRTTQNLRMTIARQLAEILLRGMCEQSYWSPLEEPPYQSPLDDPLRKGANTKAYTLPRRARVYSGENIFCPQENTEEALLLLLISESMANRDAVLSRIPEHKSDRLISLQSASVVYDLLTIALGRRGQYEMLSECLERAMKFAFEEFHLWYQFALSLMAAGKSARAVKVLKECIRLKPDDATIPLLAAKLCVGSLHWLEEAEKFAKTVVDVGEKTSEFKAKGYLALGLTYSLQATDASLRGMQEGLQRKALLAFQRAHSLSPTDHQAAFYLALQLAISRQIPEALGYVRQALQLQGDDANSLHLLALLLSAQKHYHDALNIIDMALSEYPENFILLFSKVKLESLCRGPDEALLTCKHMLQIWKSCYNLTNPSDSGRGSSLLDRTIADRRQLNTITLPDFSDPETGSVHATSVAASRVEQALSEVASSLQSSAPKQGPLHPWMTLAQIWLHAAEVYIGIGKPAEATACTQEAANLFPMSHNVLYMRGQVAELRGHFDEARRWYEEALSISPTHVKSMQRLALVLHQLGRYSLAEKILRDAVQVNSTAHEVWNGLGEVLQAQGNDAAATECFLTALELEASSPAVPFTVIPRVL.

A TPR 1 repeat occupies 97–131 (QESNLVMAKLTYVEGDYKEALNIYARVGLDDLPLT). Ser-160 and Ser-202 each carry phosphoserine. TPR repeat units lie at residues 219–252 (ETGL…VETR), 363–396 (SVVY…AFEE), 397–430 (FHLW…KPDD), 479–514 (TYSL…SPTD), 516–548 (QAAF…QGDD), and 549–582 (ANSL…YPEN). 7 positions are modified to phosphoserine: Ser-625, Ser-629, Ser-630, Ser-673, Ser-677, Ser-678, and Ser-681. TPR repeat units follow at residues 696-729 (AQIW…FPMS), 730-763 (HNVL…SPTH), 765-797 (KSMQ…NSTA), and 798-831 (HEVW…EASS).

Component of a phosphatidylinositol 4-kinase (PI4K) complex, composed of PI4KA, EFR3 (EFR3A or EFR3B), TTC7 (TTC7A or TTC7B) and HYCC (HYCC1 or HYCC2). Interacts with PI4KA, interaction is direct. Interacts with EFR3 (EFR3A or EFR3B), interaction is direct. Interacts with HYCC (HYCC1 or HYCC2), interaction is direct. Association with the PI4K complex is strongly reduced by TMEM150A.

The protein localises to the cytoplasm. The protein resides in the cytosol. It localises to the cell membrane. Functionally, component of a complex required to localize phosphatidylinositol 4-kinase (PI4K) to the plasma membrane. The complex acts as a regulator of phosphatidylinositol 4-phosphate (PtdIns(4)P) synthesis. In the complex, plays a central role in bridging PI4KA to EFR3B and HYCC1, via direct interactions. In Mus musculus (Mouse), this protein is Tetratricopeptide repeat protein 7B.